Here is a 243-residue protein sequence, read N- to C-terminus: LexA repressor (243 aa).

The tract at residues 1–30 (MSDDTGEFTDGSTESPADADGAGRRRAVDN) is disordered. Residues 21 to 30 (GAGRRRAVDN) are compositionally biased toward basic and acidic residues. Positions 56–76 (IREIGDAVGLTSTSSVAHQLR) form a DNA-binding region, H-T-H motif. Catalysis depends on for autocatalytic cleavage activity residues S167 and K204.

The protein belongs to the peptidase S24 family. As to quaternary structure, homodimer.

It carries out the reaction Hydrolysis of Ala-|-Gly bond in repressor LexA.. Represses a number of genes involved in the response to DNA damage (SOS response), including recA and lexA. In the presence of single-stranded DNA, RecA interacts with LexA causing an autocatalytic cleavage which disrupts the DNA-binding part of LexA, leading to derepression of the SOS regulon and eventually DNA repair. This is LexA repressor from Mycolicibacterium smegmatis (strain ATCC 700084 / mc(2)155) (Mycobacterium smegmatis).